Consider the following 615-residue polypeptide: Chaperone protein HscA homolog (615 aa).

It belongs to the heat shock protein 70 family.

Its function is as follows. Chaperone involved in the maturation of iron-sulfur cluster-containing proteins. Has a low intrinsic ATPase activity which is markedly stimulated by HscB. The protein is Chaperone protein HscA homolog of Aeromonas salmonicida (strain A449).